Reading from the N-terminus, the 193-residue chain is Segregation and condensation protein B (193 aa).

The protein belongs to the ScpB family. Homodimer. Homodimerization may be required to stabilize the binding of ScpA to the Smc head domains. Component of a cohesin-like complex composed of ScpA, ScpB and the Smc homodimer, in which ScpA and ScpB bind to the head domain of Smc. The presence of the three proteins is required for the association of the complex with DNA.

The protein resides in the cytoplasm. Participates in chromosomal partition during cell division. May act via the formation of a condensin-like complex containing Smc and ScpA that pull DNA away from mid-cell into both cell halves. This is Segregation and condensation protein B from Shouchella clausii (strain KSM-K16) (Alkalihalobacillus clausii).